A 421-amino-acid polypeptide reads, in one-letter code: 4-hydroxy-3-methylbut-2-en-1-yl diphosphate synthase (flavodoxin) (421 aa).

[4Fe-4S] cluster contacts are provided by C311, C314, C357, and E364.

This sequence belongs to the IspG family. It depends on [4Fe-4S] cluster as a cofactor.

It catalyses the reaction (2E)-4-hydroxy-3-methylbut-2-enyl diphosphate + oxidized [flavodoxin] + H2O + 2 H(+) = 2-C-methyl-D-erythritol 2,4-cyclic diphosphate + reduced [flavodoxin]. It functions in the pathway isoprenoid biosynthesis; isopentenyl diphosphate biosynthesis via DXP pathway; isopentenyl diphosphate from 1-deoxy-D-xylulose 5-phosphate: step 5/6. Its function is as follows. Converts 2C-methyl-D-erythritol 2,4-cyclodiphosphate (ME-2,4cPP) into 1-hydroxy-2-methyl-2-(E)-butenyl 4-diphosphate. This Xanthomonas axonopodis pv. citri (strain 306) protein is 4-hydroxy-3-methylbut-2-en-1-yl diphosphate synthase (flavodoxin).